The sequence spans 581 residues: MNQNRGSTIIEIRDLWYTYPGRAETTLKGIDLKIKEGEFVLLTGPTGCGKSTLLKTLNGIIPHESEGIFSGSIKISGIETVDSGQMELSKKAGLVFQSPDDQIFSTTVEDEVAFGPENLCMEREEIDKKVDDALKMVGMSGHRLDSTNSLSGGQKQRVCIASMLAMMPEILAMDEPVSQMDPAGTQEILNTVRELNRKQNITILLVEHRIHEIAPFADRVVIMDSGKIILDQPASKAFENLEVFHRLGLRVPEPVELCHTLGIKASPFSAEETFPLLNTGNFKEKIGDYPASPGRKEKTSSPGWSSENNEPLVSVRDLWSGYDKSRMVLKGINLEIHRGERVAVMGTNGSGKSTLLLNLAAMLRPYKGNVKIFGEDTKTKNPYSFAGRIGFVFQNPDLMLFCDSTEEEAKFGPARLKLDNIEERAKISLEAMSILNLRKDLPQSLSRGQRLRTAVASILSIDPILVLLDEPTTGQDRVNIEQMMDYFKTRGSTLVFCTHDIEIAMLYATRILVMNEGQIIADGRGRDVIKDIDILRKASLTQPPVVEIASYLGIDAFSITELVDGLIHRNPEIRIAEGIKC.

In terms of domain architecture, ABC transporter 1 spans 10–250 (IEIRDLWYTY…LEVFHRLGLR (241 aa)). 44–51 (GPTGCGKS) is a binding site for ATP. Positions 287 to 309 (GDYPASPGRKEKTSSPGWSSENN) are disordered. Residues 300-309 (SSPGWSSENN) show a composition bias toward polar residues. Positions 313-541 (VSVRDLWSGY…IDILRKASLT (229 aa)) constitute an ABC transporter 2 domain. Residue 346 to 353 (GTNGSGKS) coordinates ATP.

This sequence belongs to the ABC transporter superfamily.

It localises to the cell membrane. Functionally, probably part of an ABC transporter complex. Responsible for energy coupling to the transport system. This chain is Putative ABC transporter ATP-binding protein MM_1996, found in Methanosarcina mazei (strain ATCC BAA-159 / DSM 3647 / Goe1 / Go1 / JCM 11833 / OCM 88) (Methanosarcina frisia).